The primary structure comprises 265 residues: MDTAQKQRWAITLSYDGSRFYGWQKQADGVPTVQAALETALAQIAGEAVSTTVAGRTDTGVHATAQVVHFDTAAVRPVQAWVRGVNAHLPEGIAVLHARQVAPEFHARFDAYGRHYRYLLESAPVRSPLLKNRAGWTHLKLDIGQMRQAAALLIGEQDFSSFRAAECQAKSPVKTIYRADLTQSSGLVRLDLHGNAFLHHMVRNIMGALVYVGSGRLSVEGFAALIQERSRLKAPPTFMPDGLYLTGVDYPEAYGIIRPQIPEWL.

The Nucleophile role is filled by Asp58. Tyr116 is a binding site for substrate.

Belongs to the tRNA pseudouridine synthase TruA family. In terms of assembly, homodimer.

It catalyses the reaction uridine(38/39/40) in tRNA = pseudouridine(38/39/40) in tRNA. Formation of pseudouridine at positions 38, 39 and 40 in the anticodon stem and loop of transfer RNAs. The polypeptide is tRNA pseudouridine synthase A (Neisseria meningitidis serogroup C (strain 053442)).